Consider the following 58-residue polypeptide: Large ribosomal subunit protein eL24 (58 aa).

Zn(2+)-binding residues include cysteine 6, cysteine 9, cysteine 32, and cysteine 36. Residues cysteine 6 to cysteine 36 form a C4-type zinc finger.

This sequence belongs to the eukaryotic ribosomal protein eL24 family. Part of the 50S ribosomal subunit. Forms a cluster with proteins L3 and L14. The cofactor is Zn(2+).

Functionally, binds to the 23S rRNA. The chain is Large ribosomal subunit protein eL24 from Pyrobaculum neutrophilum (strain DSM 2338 / JCM 9278 / NBRC 100436 / V24Sta) (Thermoproteus neutrophilus).